A 1354-amino-acid polypeptide reads, in one-letter code: Eukaryotic translation initiation factor 3 subunit A (1354 aa).

K68 is modified (N6-acetyllysine). Residues 82 to 120 adopt a coiled-coil conformation; the sequence is NIKSLEDVVRAYLKLAEEKTEAAKEESQQMVLDIEDLDN. Residues 315-498 form the PCI domain; that stretch reads MQRMSTRVLL…RTLSFGSDLN (184 aa). Phosphoserine is present on residues S492 and S584. Positions 664-835 are interaction with EIF3B; that stretch reads LDPDFIMAKQ…REERERAERA (172 aa). Disordered regions lie at residues 809-844, 866-1249, and 1262-1354; these read EKEEEEQRRAEEQMLKEREERERAERAKREEELREY, EERE…RDRD, and DLRD…TVRR. Composition is skewed to basic and acidic residues over residues 866 to 1136, 1148 to 1249, 1262 to 1302, and 1310 to 1343; these read EERE…DDAR, GWRE…RDRD, DLRD…DPPR, and SRERERERDREGEKEKASWRAEKDRESLRRTKNE. S895 bears the Phosphoserine mark. A 1; truncated repeat occupies 924–931; that stretch reads DDERPHRR. A 22 X 10 AA approximate tandem repeats of [DA]-[DE]-[ED]-R-[PLIGFSV]-[RPS]-[RW]-[RL]-[GNIHT]-[DGLPTAM] region spans residues 924-1143; that stretch reads DDERPHRRDE…DARPGPWRPF (220 aa). The stretch at 932-941 is repeat 2; sequence DEDRLRRLGG. A 3; approximate repeat occupies 942–951; sequence DDEERESSLR. The residue at position 949 (S949) is a Phosphoserine. Repeat copies occupy residues 953-962, 963-972, 973-982, 983-992, 993-1002, 1003-1012, 1013-1022, 1023-1032, 1033-1042, 1043-1052, 1053-1062, 1064-1073, 1074-1083, 1084-1093, 1094-1103, 1104-1113, 1114-1123, and 1124-1133. S1038 carries the post-translational modification Phosphoserine. The stretch at 1134–1143 is one 22; approximate repeat; it reads DARPGPWRPF. A phosphoserine mark is found at S1159 and S1233. Phosphoserine occurs at positions 1310 and 1336.

Belongs to the eIF-3 subunit A family. As to quaternary structure, component of the eukaryotic translation initiation factor 3 (eIF-3) complex, which is composed of 13 subunits: EIF3A, EIF3B, EIF3C, EIF3D, EIF3E, EIF3F, EIF3G, EIF3H, EIF3I, EIF3J, EIF3K, EIF3L and EIF3M. The eIF-3 complex appears to include 3 stable modules: module A is composed of EIF3A, EIF3B, EIF3G and EIF3I; module B is composed of EIF3F, EIF3H, and EIF3M; and module C is composed of EIF3C, EIF3D, EIF3E, EIF3L and EIF3K. EIF3C of module C binds EIF3B of module A and EIF3H of module B, thereby linking the three modules. EIF3J is a labile subunit that binds to the eIF-3 complex via EIF3B. The eIF-3 complex interacts with RPS6KB1 under conditions of nutrient depletion. Mitogenic stimulation leads to binding and activation of a complex composed of MTOR and RPTOR, leading to phosphorylation and release of RPS6KB1 and binding of EIF4B to eIF-3. Interacts with EIF4G1. Also interacts with KRT7 and PIWIL2. In terms of processing, phosphorylated. Phosphorylation is enhanced upon serum stimulation.

The protein localises to the cytoplasm. RNA-binding component of the eukaryotic translation initiation factor 3 (eIF-3) complex, which is required for several steps in the initiation of protein synthesis. The eIF-3 complex associates with the 40S ribosome and facilitates the recruitment of eIF-1, eIF-1A, eIF-2:GTP:methionyl-tRNAi and eIF-5 to form the 43S pre-initiation complex (43S PIC). The eIF-3 complex stimulates mRNA recruitment to the 43S PIC and scanning of the mRNA for AUG recognition. The eIF-3 complex is also required for disassembly and recycling of post-termination ribosomal complexes and subsequently prevents premature joining of the 40S and 60S ribosomal subunits prior to initiation. The eIF-3 complex specifically targets and initiates translation of a subset of mRNAs involved in cell proliferation, including cell cycling, differentiation and apoptosis, and uses different modes of RNA stem-loop binding to exert either translational activation or repression. This chain is Eukaryotic translation initiation factor 3 subunit A (Eif3a), found in Rattus norvegicus (Rat).